Here is a 97-residue protein sequence, read N- to C-terminus: Na(+)/H(+) antiporter subunit F1 (97 aa).

Transmembrane regions (helical) follow at residues 3–23, 35–55, and 60–80; these read HNVI…AMLI, VVAL…FSIL, and YMIV…AVFS.

Belongs to the CPA3 antiporters (TC 2.A.63) subunit F family. In terms of assembly, may form a heterooligomeric complex that consists of seven subunits: mnhA1, mnhB1, mnhC1, mnhD1, mnhE1, mnhF1 and mnhG1.

The protein resides in the cell membrane. Functionally, mnh complex is a Na(+)/H(+) antiporter involved in Na(+) excretion. In Staphylococcus aureus (strain Mu3 / ATCC 700698), this protein is Na(+)/H(+) antiporter subunit F1 (mnhF1).